The sequence spans 272 residues: Undecaprenyl-diphosphatase (272 aa).

A run of 8 helical transmembrane segments spans residues 4–24 (FEVIKALFLGFVEGLTEFLPI), 43–63 (GGRVFEVVIQLGAILAVCWLY), 86–106 (ISVLIAFSPAVIIGVLAVDFI), 109–129 (VLFSPIVVAIALIVGALIIFW), 145–165 (ITFKQALLVGLAQCVAMIPGT), 186–206 (TEFSFFLAMPTMLGAATFDLI), 222–242 (VGFVAAFIAALLVVKALVLFV), and 249–269 (VFAWYRIVLGVIILIAAMFFN).

The protein belongs to the UppP family.

The protein resides in the cell inner membrane. It catalyses the reaction di-trans,octa-cis-undecaprenyl diphosphate + H2O = di-trans,octa-cis-undecaprenyl phosphate + phosphate + H(+). Its function is as follows. Catalyzes the dephosphorylation of undecaprenyl diphosphate (UPP). Confers resistance to bacitracin. This Acinetobacter baumannii (strain AB307-0294) protein is Undecaprenyl-diphosphatase.